The sequence spans 218 residues: MEPGFWHEKWYKQQIGFHQQDINPFLVQYWQRLALPAGAKVFVPLCGKSLDMCFLAEQGHQVIGCELNELAVQQFFSDNQLEMTQTVEGEHQHYQTEQVSLYQGDIFTLPKRITQDVTAFYDRAALIAWPEEMRTQYAKQLANLLPSGSLGLLVTLDYPQETLNGPPFAVSPNWIEAHLTDDFEIQVLACQDVLADNPRFVKKEVPWLNEAAYLLKRK.

S-adenosyl-L-methionine-binding residues include W10, L45, E66, and R123.

The protein belongs to the class I-like SAM-binding methyltransferase superfamily. TPMT family.

The protein resides in the cytoplasm. The enzyme catalyses S-adenosyl-L-methionine + a thiopurine = S-adenosyl-L-homocysteine + a thiopurine S-methylether.. The protein is Thiopurine S-methyltransferase of Shewanella putrefaciens (strain CN-32 / ATCC BAA-453).